A 433-amino-acid polypeptide reads, in one-letter code: Glutamate-1-semialdehyde 2,1-aminomutase (433 aa).

N6-(pyridoxal phosphate)lysine is present on Lys267.

Belongs to the class-III pyridoxal-phosphate-dependent aminotransferase family. HemL subfamily. As to quaternary structure, homodimer. It depends on pyridoxal 5'-phosphate as a cofactor.

The protein localises to the cytoplasm. It carries out the reaction (S)-4-amino-5-oxopentanoate = 5-aminolevulinate. It participates in porphyrin-containing compound metabolism; protoporphyrin-IX biosynthesis; 5-aminolevulinate from L-glutamyl-tRNA(Glu): step 2/2. This Syntrophobacter fumaroxidans (strain DSM 10017 / MPOB) protein is Glutamate-1-semialdehyde 2,1-aminomutase.